We begin with the raw amino-acid sequence, 313 residues long: 4-hydroxy-3-methylbut-2-enyl diphosphate reductase (313 aa).

C12 is a [4Fe-4S] cluster binding site. (2E)-4-hydroxy-3-methylbut-2-enyl diphosphate-binding residues include H41 and H74. H41 and H74 together coordinate dimethylallyl diphosphate. Isopentenyl diphosphate is bound by residues H41 and H74. C96 is a binding site for [4Fe-4S] cluster. H124 is a (2E)-4-hydroxy-3-methylbut-2-enyl diphosphate binding site. H124 is a dimethylallyl diphosphate binding site. H124 lines the isopentenyl diphosphate pocket. Residue E126 is the Proton donor of the active site. Residue T167 coordinates (2E)-4-hydroxy-3-methylbut-2-enyl diphosphate. C197 serves as a coordination point for [4Fe-4S] cluster. (2E)-4-hydroxy-3-methylbut-2-enyl diphosphate-binding residues include S225, S226, N227, and S269. Residues S225, S226, N227, and S269 each coordinate dimethylallyl diphosphate. Isopentenyl diphosphate is bound by residues S225, S226, N227, and S269.

Belongs to the IspH family. [4Fe-4S] cluster serves as cofactor.

The catalysed reaction is isopentenyl diphosphate + 2 oxidized [2Fe-2S]-[ferredoxin] + H2O = (2E)-4-hydroxy-3-methylbut-2-enyl diphosphate + 2 reduced [2Fe-2S]-[ferredoxin] + 2 H(+). The enzyme catalyses dimethylallyl diphosphate + 2 oxidized [2Fe-2S]-[ferredoxin] + H2O = (2E)-4-hydroxy-3-methylbut-2-enyl diphosphate + 2 reduced [2Fe-2S]-[ferredoxin] + 2 H(+). The protein operates within isoprenoid biosynthesis; dimethylallyl diphosphate biosynthesis; dimethylallyl diphosphate from (2E)-4-hydroxy-3-methylbutenyl diphosphate: step 1/1. It participates in isoprenoid biosynthesis; isopentenyl diphosphate biosynthesis via DXP pathway; isopentenyl diphosphate from 1-deoxy-D-xylulose 5-phosphate: step 6/6. Functionally, catalyzes the conversion of 1-hydroxy-2-methyl-2-(E)-butenyl 4-diphosphate (HMBPP) into a mixture of isopentenyl diphosphate (IPP) and dimethylallyl diphosphate (DMAPP). Acts in the terminal step of the DOXP/MEP pathway for isoprenoid precursor biosynthesis. In Methylococcus capsulatus (strain ATCC 33009 / NCIMB 11132 / Bath), this protein is 4-hydroxy-3-methylbut-2-enyl diphosphate reductase.